The sequence spans 642 residues: 4-hydroxy-3-methylbut-2-enyl diphosphate reductase (642 aa).

A 4-hydroxy-3-methylbut-2-enyl diphosphate reductase region spans residues 1-282; it reads MRKVMLAEKA…EEAISKMSEN (282 aa). Cys13 contacts [4Fe-4S] cluster. 2 residues coordinate (2E)-4-hydroxy-3-methylbut-2-enyl diphosphate: His42 and His77. Dimethylallyl diphosphate contacts are provided by His42 and His77. Residues His42 and His77 each coordinate isopentenyl diphosphate. Cys99 contributes to the [4Fe-4S] cluster binding site. Position 127 (His127) interacts with (2E)-4-hydroxy-3-methylbut-2-enyl diphosphate. His127 provides a ligand contact to dimethylallyl diphosphate. His127 serves as a coordination point for isopentenyl diphosphate. Catalysis depends on Glu129, which acts as the Proton donor. (2E)-4-hydroxy-3-methylbut-2-enyl diphosphate is bound at residue Thr165. Cys193 serves as a coordination point for [4Fe-4S] cluster. Ser221, Ser222, Asn223, and Ser266 together coordinate (2E)-4-hydroxy-3-methylbut-2-enyl diphosphate. 4 residues coordinate dimethylallyl diphosphate: Ser221, Ser222, Asn223, and Ser266. Residues Ser221, Ser222, Asn223, and Ser266 each contribute to the isopentenyl diphosphate site. S1 motif domains lie at 309–377, 484–552, and 569–638; these read GASV…LSVK, GQVV…LSVK, and GSVV…LSIR.

It in the N-terminal section; belongs to the IspH family. It depends on [4Fe-4S] cluster as a cofactor.

The enzyme catalyses isopentenyl diphosphate + 2 oxidized [2Fe-2S]-[ferredoxin] + H2O = (2E)-4-hydroxy-3-methylbut-2-enyl diphosphate + 2 reduced [2Fe-2S]-[ferredoxin] + 2 H(+). The catalysed reaction is dimethylallyl diphosphate + 2 oxidized [2Fe-2S]-[ferredoxin] + H2O = (2E)-4-hydroxy-3-methylbut-2-enyl diphosphate + 2 reduced [2Fe-2S]-[ferredoxin] + 2 H(+). The protein operates within isoprenoid biosynthesis; dimethylallyl diphosphate biosynthesis; dimethylallyl diphosphate from (2E)-4-hydroxy-3-methylbutenyl diphosphate: step 1/1. It participates in isoprenoid biosynthesis; isopentenyl diphosphate biosynthesis via DXP pathway; isopentenyl diphosphate from 1-deoxy-D-xylulose 5-phosphate: step 6/6. In terms of biological role, catalyzes the conversion of 1-hydroxy-2-methyl-2-(E)-butenyl 4-diphosphate (HMBPP) into a mixture of isopentenyl diphosphate (IPP) and dimethylallyl diphosphate (DMAPP). Acts in the terminal step of the DOXP/MEP pathway for isoprenoid precursor biosynthesis. This is 4-hydroxy-3-methylbut-2-enyl diphosphate reductase from Clostridium acetobutylicum (strain ATCC 824 / DSM 792 / JCM 1419 / IAM 19013 / LMG 5710 / NBRC 13948 / NRRL B-527 / VKM B-1787 / 2291 / W).